The following is an 89-amino-acid chain: MAVKIRLKRMGAKKKPFYRIVVADSRSPRDGRFIETIGTYNPVAEPAEIKIDEELALKWLQNGAKPSDTRSLLSKQGLLEKFHNLKYGK.

Belongs to the bacterial ribosomal protein bS16 family.

The polypeptide is Small ribosomal subunit protein bS16 (Geobacillus stearothermophilus (Bacillus stearothermophilus)).